Reading from the N-terminus, the 260-residue chain is Cell division protein FtsQ (260 aa).

The Cytoplasmic portion of the chain corresponds to 1 to 26 (MINKVLLEGQRITRSPQVKQHACGAS). Residues 27 to 47 (FFLVVLLLIGGLLYSTISWMW) form a helical membrane-spanning segment. Residues 48–260 (DEQRLPLSKL…QELTQEKNDD (213 aa)) are Periplasmic-facing. In terms of domain architecture, POTRA spans 52 to 122 (LPLSKLVLQG…DTIKVYLTEY (71 aa)).

Belongs to the FtsQ/DivIB family. FtsQ subfamily. Part of a complex composed of FtsB, FtsL and FtsQ.

The protein localises to the cell inner membrane. Functionally, essential cell division protein. May link together the upstream cell division proteins, which are predominantly cytoplasmic, with the downstream cell division proteins, which are predominantly periplasmic. May control correct divisome assembly. The chain is Cell division protein FtsQ from Vibrio cholerae serotype O1 (strain ATCC 39315 / El Tor Inaba N16961).